Consider the following 382-residue polypeptide: Lipid-A-disaccharide synthase (382 aa).

It belongs to the LpxB family.

The enzyme catalyses 2-N,3-O-bis[(3R)-3-hydroxytetradecanoyl]-alpha-D-glucosaminyl 1-phosphate + UDP-2-N,3-O-bis[(3R)-3-hydroxytetradecanoyl]-alpha-D-glucosamine = lipid A disaccharide (E. coli) + UDP + H(+). It carries out the reaction a lipid X + a UDP-2-N,3-O-bis[(3R)-3-hydroxyacyl]-alpha-D-glucosamine = a lipid A disaccharide + UDP + H(+). Its pathway is glycolipid biosynthesis; lipid IV(A) biosynthesis; lipid IV(A) from (3R)-3-hydroxytetradecanoyl-[acyl-carrier-protein] and UDP-N-acetyl-alpha-D-glucosamine: step 5/6. Functionally, condensation of UDP-2,3-diacylglucosamine and 2,3-diacylglucosamine-1-phosphate to form lipid A disaccharide, a precursor of lipid A, a phosphorylated glycolipid that anchors the lipopolysaccharide to the outer membrane of the cell. The protein is Lipid-A-disaccharide synthase of Escherichia coli O17:K52:H18 (strain UMN026 / ExPEC).